The following is a 411-amino-acid chain: BRO1 domain-containing protein BROX (411 aa).

Positions 90–408 (FKWTDTLQGQ…DIKPQKDTGC (319 aa)) constitute a BRO1 domain. An N6-acetyllysine modification is found at lysine 283. Positions 372 to 411 (AFDLTKRPKDDSTKPKPEEEVKPVKEPDIKPQKDTGCYIS) are disordered. The span at 375 to 404 (LTKRPKDDSTKPKPEEEVKPVKEPDIKPQK) shows a compositional bias: basic and acidic residues. Cysteine 408 is subject to Cysteine methyl ester. Residue cysteine 408 is the site of S-farnesyl cysteine attachment. A propeptide spans 409–411 (YIS) (removed in mature form).

Belongs to the BROX family. In terms of assembly, monomer. Interacts with CHMP4B. Interacts with CHMP5: this interaction allows the recruitment of BROX to cellular membranes. Interacts with SYN2; this interaction promotes SYN2 ubiquitination and facilitates the relaxation of mechanical stress imposed by compressive actin fibers at the rupture site. Farnesylation is required for nuclear envelope localization.

It is found in the nucleus membrane. In terms of biological role, nuclear envelope-associated factor that is involved in the nuclear envelope ruptures during interphase (NERDI) repair, where it is locally recruited by CHMP5 and reduces cytoskeletal stress through its action on SYN2 to help reseal the ruptured membrane. The polypeptide is BRO1 domain-containing protein BROX (Homo sapiens (Human)).